Reading from the N-terminus, the 246-residue chain is Small ribosomal subunit protein uS2 (246 aa).

Positions 224–246 (AKQGEEEAEAAEETAPETETTTA) are disordered. Acidic residues predominate over residues 229 to 239 (EEAEAAEETAP).

It belongs to the universal ribosomal protein uS2 family.

In Bacillus velezensis (strain DSM 23117 / BGSC 10A6 / LMG 26770 / FZB42) (Bacillus amyloliquefaciens subsp. plantarum), this protein is Small ribosomal subunit protein uS2.